Consider the following 225-residue polypeptide: Cytidylate kinase (225 aa).

Residue 12 to 20 (GPSGAGKGT) participates in ATP binding.

The protein belongs to the cytidylate kinase family. Type 1 subfamily.

Its subcellular location is the cytoplasm. The enzyme catalyses CMP + ATP = CDP + ADP. The catalysed reaction is dCMP + ATP = dCDP + ADP. The polypeptide is Cytidylate kinase (Edwardsiella ictaluri (strain 93-146)).